A 649-amino-acid chain; its full sequence is Acetyl-coenzyme A synthetase (649 aa).

CoA is bound by residues 189 to 192, Thr-311, and Asn-335; that span reads RGGK. Residues 387–389, 411–416, Asp-500, and Arg-515 contribute to the ATP site; these read GEP and DTWWQT. Residue Ser-523 participates in CoA binding. Arg-526 serves as a coordination point for ATP. Mg(2+) contacts are provided by Val-537, His-539, and Val-542. Arg-584 contributes to the CoA binding site. Lys-609 is modified (N6-acetyllysine).

Belongs to the ATP-dependent AMP-binding enzyme family. Mg(2+) serves as cofactor. In terms of processing, acetylated. Deacetylation by the SIR2-homolog deacetylase activates the enzyme.

The catalysed reaction is acetate + ATP + CoA = acetyl-CoA + AMP + diphosphate. Its function is as follows. Catalyzes the conversion of acetate into acetyl-CoA (AcCoA), an essential intermediate at the junction of anabolic and catabolic pathways. AcsA undergoes a two-step reaction. In the first half reaction, AcsA combines acetate with ATP to form acetyl-adenylate (AcAMP) intermediate. In the second half reaction, it can then transfer the acetyl group from AcAMP to the sulfhydryl group of CoA, forming the product AcCoA. The protein is Acetyl-coenzyme A synthetase of Sinorhizobium fredii (strain NBRC 101917 / NGR234).